The primary structure comprises 379 residues: Putative acetyl-CoA C-acetyltransferase VraB (379 aa).

Cysteine 86 acts as the Acyl-thioester intermediate in catalysis. Residue histidine 338 is the Proton acceptor of the active site.

The protein belongs to the thiolase-like superfamily. Thiolase family.

This is Putative acetyl-CoA C-acetyltransferase VraB (vraB) from Staphylococcus aureus (strain MSSA476).